A 546-amino-acid chain; its full sequence is Probable protein kinase UbiB (546 aa).

The Protein kinase domain maps to 124 to 502 (DFDITPLASA…RVKQGQSRYL (379 aa)). ATP contacts are provided by residues 130 to 138 (LASASIAQV) and K153. D288 (proton acceptor) is an active-site residue. 2 consecutive transmembrane segments (helical) span residues 501–518 (YLFGIGATLMLSSTLLFI) and 523–542 (WGMSPGWLMAGGILVWLIGW).

The protein belongs to the ABC1 family. UbiB subfamily.

It localises to the cell inner membrane. Its pathway is cofactor biosynthesis; ubiquinone biosynthesis [regulation]. Is probably a protein kinase regulator of UbiI activity which is involved in aerobic coenzyme Q (ubiquinone) biosynthesis. This Cronobacter sakazakii (strain ATCC BAA-894) (Enterobacter sakazakii) protein is Probable protein kinase UbiB.